A 647-amino-acid chain; its full sequence is Threonine--tRNA ligase (647 aa).

The 61-residue stretch at 1–61 folds into the TGS domain; sequence MINITFPDGA…TEDGSIEIVT (61 aa). Residues 242 to 540 are catalytic; it reads DHRKLGKELD…LIENYKGAFP (299 aa). Residues Cys-336, His-387, and His-517 each coordinate Zn(2+).

The protein belongs to the class-II aminoacyl-tRNA synthetase family. Homodimer. Requires Zn(2+) as cofactor.

The protein resides in the cytoplasm. The catalysed reaction is tRNA(Thr) + L-threonine + ATP = L-threonyl-tRNA(Thr) + AMP + diphosphate + H(+). In terms of biological role, catalyzes the attachment of threonine to tRNA(Thr) in a two-step reaction: L-threonine is first activated by ATP to form Thr-AMP and then transferred to the acceptor end of tRNA(Thr). Also edits incorrectly charged L-seryl-tRNA(Thr). The chain is Threonine--tRNA ligase from Streptococcus pneumoniae (strain P1031).